The chain runs to 120 residues: NAD(P)H-quinone oxidoreductase subunit 3, chloroplastic (120 aa).

Helical transmembrane passes span 9-29, 64-84, and 88-108; these read IFWT…WISG, MFAL…PWAM, and VLGV…VVGL.

The protein belongs to the complex I subunit 3 family. As to quaternary structure, NDH is composed of at least 16 different subunits, 5 of which are encoded in the nucleus.

The protein resides in the plastid. It localises to the chloroplast thylakoid membrane. It catalyses the reaction a plastoquinone + NADH + (n+1) H(+)(in) = a plastoquinol + NAD(+) + n H(+)(out). The enzyme catalyses a plastoquinone + NADPH + (n+1) H(+)(in) = a plastoquinol + NADP(+) + n H(+)(out). Its function is as follows. NDH shuttles electrons from NAD(P)H:plastoquinone, via FMN and iron-sulfur (Fe-S) centers, to quinones in the photosynthetic chain and possibly in a chloroplast respiratory chain. The immediate electron acceptor for the enzyme in this species is believed to be plastoquinone. Couples the redox reaction to proton translocation, and thus conserves the redox energy in a proton gradient. The protein is NAD(P)H-quinone oxidoreductase subunit 3, chloroplastic of Zea mays (Maize).